We begin with the raw amino-acid sequence, 180 residues long: Large ribosomal subunit protein uL5 (180 aa).

This sequence belongs to the universal ribosomal protein uL5 family. As to quaternary structure, part of the 50S ribosomal subunit; part of the 5S rRNA/L5/L18/L25 subcomplex. Contacts the 5S rRNA and the P site tRNA. Forms a bridge to the 30S subunit in the 70S ribosome.

Its function is as follows. This is one of the proteins that bind and probably mediate the attachment of the 5S RNA into the large ribosomal subunit, where it forms part of the central protuberance. In the 70S ribosome it contacts protein S13 of the 30S subunit (bridge B1b), connecting the 2 subunits; this bridge is implicated in subunit movement. Contacts the P site tRNA; the 5S rRNA and some of its associated proteins might help stabilize positioning of ribosome-bound tRNAs. The sequence is that of Large ribosomal subunit protein uL5 from Ruminiclostridium cellulolyticum (strain ATCC 35319 / DSM 5812 / JCM 6584 / H10) (Clostridium cellulolyticum).